We begin with the raw amino-acid sequence, 495 residues long: MPLYKSQSIKIYNSLSGEKEIFSPINEGNIGMYVCGPTVYSNVHLGNVRTFMSFDVIYRYFLHLGYKVRYIRNITDVGHIVDDVDHGEDKIAKKAKLEQLEPMEIVQRYTVDFHNVLKAYNLLPPSIEPTATGHIIEQIEIVKTIINKGIGYESNGSVYFDVVKFNESNHYGKLSGRNIEDMLANTRDTDGQSDKRNHQDFALWKKAEPEHIMRWPSPWSDGFPGWHLECTAMSTKYLGSHFDIHGGGMDLKFPHHECEIAQGEACTGQEPVNYWMHANMLTLNGKKMSKSTGNNILPSEIYSGGSPFLTKAFSASVARFFMLQAHYRSNLDFTNDAILAAEKGFYRLMEAIGSLKNTAQFTTSNTTSIDIKAWKQNCYDAMNDDFNTPILIAHLFEGVRFVNVLKENKETITTEDLLDFLTTMNAFVFDVLGLEDEKLATNNNDKLDGVVEMLIQMRKQARDNKDFAMSDQIRDQLLALGIQLKDSKEGTTFSI.

C35 contacts Zn(2+). Positions P37 to N47 match the 'HIGH' region motif. C230, H255, and E259 together coordinate Zn(2+). The 'KMSKS' region motif lies at K287 to S291. K290 contacts ATP.

Belongs to the class-I aminoacyl-tRNA synthetase family. In terms of assembly, monomer. Requires Zn(2+) as cofactor.

The protein localises to the cytoplasm. It carries out the reaction tRNA(Cys) + L-cysteine + ATP = L-cysteinyl-tRNA(Cys) + AMP + diphosphate. This Flavobacterium psychrophilum (strain ATCC 49511 / DSM 21280 / CIP 103535 / JIP02/86) protein is Cysteine--tRNA ligase.